Here is a 316-residue protein sequence, read N- to C-terminus: CXXC-type zinc finger protein 5 (316 aa).

Residues 1-10 (MSSLGGGSQD) are compositionally biased toward gly residues. Residues 1 to 95 (MSSLGGGSQD…SGGAGSMMGG (95 aa)) form a disordered region. Low complexity-rich tracts occupy residues 11–27 (AGGS…SGSG) and 36–50 (SATV…VADD). The segment at 250 to 291 (GKKKRKRCGMCAPCRRRINCEQCSSCRNRKTGHQICKFRKCE) adopts a CXXC-type zinc-finger fold. The Nuclear localization signal signature appears at 251-256 (KKKRKR). Positions 257, 260, 263, 269, 272, 275, 285, and 290 each coordinate Zn(2+).

As to quaternary structure, interacts with DVL1. Interacts with RBPJ. As to expression, expressed in neural stem cells (at protein level). Expressed in the dorsal telencephalon.

It is found in the nucleus. It localises to the cytoplasm. Its function is as follows. May indirectly participate in activation of the NF-kappa-B and MAPK pathways. Required for DNA damage-induced ATM phosphorylation, p53 activation and cell cycle arrest. Involved in myelopoiesis. Acts as a mediator of BMP4-mediated modulation of canonical Wnt signaling activity in neural stem cells. Binds to the oxygen responsive element of COX4I2 and represses its transcription under hypoxia conditions (4% oxygen), as well as normoxia conditions (20% oxygen). May repress COX4I2 transactivation induced by CHCHD2 and RBPJ. Binds preferentially to DNA containing cytidine-phosphate-guanosine (CpG) dinucleotides over CpH (H=A, T, and C), hemimethylated-CpG and hemimethylated-hydroxymethyl-CpG. In Rattus norvegicus (Rat), this protein is CXXC-type zinc finger protein 5 (Cxxc5).